Consider the following 215-residue polypeptide: C-type lectin domain family 4 member D (215 aa).

Residues 1–17 are Cytoplasmic-facing; that stretch reads MGLEKPQSKLEGGMHPQ. A helical; Signal-anchor for type II membrane protein membrane pass occupies residues 18-38; it reads LIPSVIAVVFILLLSVCFIAS. Over 39–215 the chain is Extracellular; that stretch reads CLVTHHNFSR…ICKIPGTTLN (177 aa). Asparagine 45 carries N-linked (GlcNAc...) asparagine glycosylation. A disulfide bond links cysteine 84 and cysteine 95. Residues 91–208 form the C-type lectin domain; sequence FQSNCYFPLT…CNFEASRICK (118 aa). N-linked (GlcNAc...) asparagine glycosylation is found at asparagine 102 and asparagine 111. Intrachain disulfides connect cysteine 112-cysteine 207 and cysteine 182-cysteine 199. Ca(2+) contacts are provided by glutamate 173, aspartate 175, asparagine 195, and aspartate 196.

In terms of assembly, heterodimer with CLEC4E; disulfide-linked. CLEC4E acts as a bridge for interaction between CLEC4D and FCER1G to form a functional complex. Heterodimer with CLEC6A; this heterodimer forms a pattern recognition receptor (PRR) against fungal infection. As to expression, expressed weakly in peripheral blood leukocytes, bone marrow and spleen. Expression is confined mostly in monocytes and macrophage and seems to be up-regulated by IL-6, IL-10, TNF-alpha and IFN-gamma.

Its subcellular location is the cell membrane. In terms of biological role, calcium-dependent lectin that acts as a pattern recognition receptor (PRR) of the innate immune system: recognizes damage-associated molecular patterns (DAMPs) of pathogen-associated molecular patterns (PAMPs) of bacteria and fungi. The PAMPs include alpha-mannans on C.albicans hypheas and mycobacterial trehalose 6,6'-dimycolate (TDM). Interacts with signaling adapter Fc receptor gamma chain/FCER1G, likely via CLEC4E, to form a functional complex in myeloid cells. Binding of mycobacterial TDM or C.albicans alpha-mannans to this receptor complex leads to phosphorylation of the immunoreceptor tyrosine-based activation motif (ITAM) of FCER1G, triggering activation of SYK, CARD9 and NF-kappa-B, consequently driving maturation of antigen-presenting cells and shaping antigen-specific priming of T-cells toward effector T-helper 1 and T-helper 17 cell subtypes. The heterodimer formed with CLEC6A is active against fungal infection. Functions as an endocytic receptor. May be involved in antigen uptake at the site of infection, either for clearance of the antigen, or for processing and further presentation to T-cells. The chain is C-type lectin domain family 4 member D from Homo sapiens (Human).